A 231-amino-acid chain; its full sequence is Sugar fermentation stimulation protein homolog (231 aa).

It belongs to the SfsA family.

This chain is Sugar fermentation stimulation protein homolog, found in Geotalea uraniireducens (strain Rf4) (Geobacter uraniireducens).